Reading from the N-terminus, the 288-residue chain is UDP-3-O-acyl-N-acetylglucosamine deacetylase (288 aa).

Residues H79, H236, and D240 each contribute to the Zn(2+) site. The active-site Proton donor is H263.

Belongs to the LpxC family. Zn(2+) serves as cofactor.

The enzyme catalyses a UDP-3-O-[(3R)-3-hydroxyacyl]-N-acetyl-alpha-D-glucosamine + H2O = a UDP-3-O-[(3R)-3-hydroxyacyl]-alpha-D-glucosamine + acetate. It functions in the pathway glycolipid biosynthesis; lipid IV(A) biosynthesis; lipid IV(A) from (3R)-3-hydroxytetradecanoyl-[acyl-carrier-protein] and UDP-N-acetyl-alpha-D-glucosamine: step 2/6. Catalyzes the hydrolysis of UDP-3-O-myristoyl-N-acetylglucosamine to form UDP-3-O-myristoylglucosamine and acetate, the committed step in lipid A biosynthesis. The polypeptide is UDP-3-O-acyl-N-acetylglucosamine deacetylase (Rickettsia felis (strain ATCC VR-1525 / URRWXCal2) (Rickettsia azadi)).